A 1101-amino-acid chain; its full sequence is Error-prone DNA polymerase (1101 aa).

Positions 1055–1101 (ADLGHPMDSAVGQTTPQTDSAPRPRPQPRAMHPREQAKRLFPSRDFH) are disordered. Over residues 1065 to 1074 (VGQTTPQTDS) the composition is skewed to polar residues. A compositionally biased stretch (basic and acidic residues) spans 1086-1101 (HPREQAKRLFPSRDFH).

The protein belongs to the DNA polymerase type-C family. DnaE2 subfamily.

It localises to the cytoplasm. The catalysed reaction is DNA(n) + a 2'-deoxyribonucleoside 5'-triphosphate = DNA(n+1) + diphosphate. Its function is as follows. DNA polymerase involved in damage-induced mutagenesis and translesion synthesis (TLS). It is not the major replicative DNA polymerase. This chain is Error-prone DNA polymerase, found in Ruegeria pomeroyi (strain ATCC 700808 / DSM 15171 / DSS-3) (Silicibacter pomeroyi).